We begin with the raw amino-acid sequence, 229 residues long: DNA mismatch repair protein MutH (229 aa).

The protein belongs to the MutH family.

Its subcellular location is the cytoplasm. Functionally, sequence-specific endonuclease that cleaves unmethylated GATC sequences. It is involved in DNA mismatch repair. This is DNA mismatch repair protein MutH from Shigella boydii serotype 18 (strain CDC 3083-94 / BS512).